Here is a 239-residue protein sequence, read N- to C-terminus: Peroxygenase (239 aa).

The residue at position 2 (Gly-2) is an N-acetylglycine. Residues 60–95 (HNMSVLQQRAAFFDRNNDGIVYPWETYQGFRAVGFG) enclose the EF-hand domain. The Ca(2+) site is built by Asp-73, Asn-75, Asp-77, and Glu-84. Residues 116–125 (PSWIPSPVLS) carry the Proline-knot motif.

This sequence belongs to the caleosin family. In terms of assembly, homodimer. The cofactor is heme b. Ca(2+) serves as cofactor. Expressed in pollen (at protein level). Not expressed in leaf, root, stem, tepal, ovary, style, filament or stigma (at protein level).

The protein localises to the lipid droplet. The protein resides in the microsome membrane. It carries out the reaction RH + ROOH = ROH + ROH.. In terms of biological role, calcium-binding peroxygenase involved in the degradation of storage lipid in oil bodies. The protein is Peroxygenase of Lilium longiflorum (Trumpet lily).